The following is a 437-amino-acid chain: Enolase (437 aa).

A (2R)-2-phosphoglycerate-binding site is contributed by glutamine 162. Glutamate 204 serves as the catalytic Proton donor. Residues aspartate 251, glutamate 297, and aspartate 324 each coordinate Mg(2+). (2R)-2-phosphoglycerate is bound by residues lysine 349, arginine 378, serine 379, and lysine 400. The Proton acceptor role is filled by lysine 349.

It belongs to the enolase family. It depends on Mg(2+) as a cofactor.

The protein resides in the cytoplasm. The protein localises to the secreted. Its subcellular location is the cell surface. It carries out the reaction (2R)-2-phosphoglycerate = phosphoenolpyruvate + H2O. It participates in carbohydrate degradation; glycolysis; pyruvate from D-glyceraldehyde 3-phosphate: step 4/5. Catalyzes the reversible conversion of 2-phosphoglycerate (2-PG) into phosphoenolpyruvate (PEP). It is essential for the degradation of carbohydrates via glycolysis. The sequence is that of Enolase from Pelodictyon phaeoclathratiforme (strain DSM 5477 / BU-1).